Reading from the N-terminus, the 3051-residue chain is Biorientation of chromosomes in cell division protein 1-like 1 (3051 aa).

The span at 1–33 shows a compositional bias: pro residues; that stretch reads MATNPQPQPPPPAPPPPPPQPQPQPPPPPPGPG. 5 disordered regions span residues 1–47, 164–197, 215–288, 301–393, and 411–469; these read MATN…AGAG, HKEEGSGNTAPDDEKPDTSLITQGVPTPGPSANV, ASAA…CPVE, ILLN…KEDF, and VHTS…VRHA. The span at 34–47 shows a compositional bias: gly residues; sequence AGPGAGGAGGAGAG. Over residues 215–227 the composition is skewed to low complexity; sequence ASAARASTETSNA. Residues 246–263 are compositionally biased toward basic and acidic residues; that stretch reads STDKERTSEDMADKEKST. Residue Ser266 is modified to Phosphoserine. Positions 312–393 are enriched in basic and acidic residues; the sequence is SEQKNKSTDK…KTVEGTKEDF (82 aa). A compositionally biased stretch (acidic residues) spans 418-443; sequence SFEEDTEEEVVTSDSMEEGEITSDDE. Position 473 is an N6-acetyllysine (Lys473). Phosphoserine occurs at positions 482 and 484. 3 stretches are compositionally biased toward basic and acidic residues: residues 497-527, 549-570, and 580-653; these read IAKEKEERLLRRQINREKLEEKRKQKAEKTK, LEPKAARIKEVLKERKVLEKKV, and SRNV…LERE. The interval 497–1203 is disordered; sequence IAKEKEERLL…EKHADHRSTL (707 aa). Residues Ser635 and Ser659 each carry the phosphoserine modification. Thr660 and Thr733 each carry phosphothreonine. Basic and acidic residues-rich tracts occupy residues 671–772, 804–852, 866–878, 940–966, 984–1021, and 1028–1075; these read TDTR…EENI, KDGK…KIQK, RRSESYSEDKCDM, KPDKEKNTEENDSEKQRKSKVEDKPFE, TQKDSSHRAKLPLAKEKYKSDKDSTSTRLERKLSDGHK, and SSKD…ENRR. Ser1077 is subject to Phosphoserine. Composition is skewed to polar residues over residues 1092–1103 and 1135–1148; these read NTLSTPSGSSLQ and SKTQDNRNNNSQQD. Residues Ser1145 and Ser1318 each carry the phosphoserine modification. Thr1354 carries the phosphothreonine modification. 3 disordered regions span residues 1456-1550, 1700-1725, and 1760-1890; these read KLKH…QSEV, GSISSEEVDGSQGNMMRMGPKKETEG, and VVLG…TGLG. A compositionally biased stretch (basic and acidic residues) spans 1465–1479; sequence KVKDISIDVERRNEN. The segment covering 1482–1504 has biased composition (polar residues); it reads VDTSAGSGSAPSVLHQRNGQTED. Phosphoserine occurs at positions 1531, 1701, and 1710. Residues Ser2013, Ser2025, Ser2128, and Ser2203 each carry the phosphoserine modification. 6 disordered regions span residues 2189 to 2210, 2258 to 2285, 2403 to 2447, 2472 to 2519, 2615 to 2635, and 2717 to 3051; these read DFEGPMPSAPPEAESPLASTSK, TSSVEDCEGPVSSAVPQEEGDPSVTPAE, STEE…FAGR, EDKS…AKDP, DQASAEKTGDDNSTRKSFPEE, and VENS…KAKR. A compositionally biased stretch (low complexity) spans 2191 to 2207; sequence EGPMPSAPPEAESPLAS. A compositionally biased stretch (basic and acidic residues) spans 2428–2439; sequence AEKEEKHGKECP. Ser2475 is subject to Phosphoserine. Residues 2483-2492 show a composition bias toward low complexity; the sequence is GSSTASYSAG. Residues Ser2501 and Ser2618 each carry the phosphoserine modification. Basic and acidic residues-rich tracts occupy residues 2621–2633, 2724–2746, and 2754–2767; these read KTGDDNSTRKSFP, TNEEIHSESYNKGEISSGRKDNA, and VEADPKEVEEEERH. Over residues 2780–2789 the composition is skewed to acidic residues; that stretch reads SEDEPDDNPD. Over residues 2791-2822 the composition is skewed to basic and acidic residues; that stretch reads LDSRIETAQRQCPETEPHDTKEENSRDLEELP. Polar residues predominate over residues 2823–2834; sequence KTSSETNSTTSR. A compositionally biased stretch (basic and acidic residues) spans 2848-2864; it reads TGEKPEQNDDDTIKSQE. The span at 2871–2880 shows a compositional bias: basic residues; that stretch reads IKRKRGRPRK. A DNA-binding region (a.T hook) is located at residues 2872–2884; it reads KRKRGRPRKYPVE. The span at 2896–2910 shows a compositional bias: polar residues; sequence DTGIVTVEQSPSSSK. Phosphoserine is present on residues Ser2905 and Ser2907. A compositionally biased stretch (basic residues) spans 2944-2953; it reads VRRRGRKPKR. The residue at position 2954 (Ser2954) is a Phosphoserine. Thr2956 is modified (phosphothreonine). Phosphoserine occurs at positions 2958, 2964, and 2973. Glycyl lysine isopeptide (Lys-Gly) (interchain with G-Cter in ubiquitin) cross-links involve residues Lys2981 and Lys2982. Positions 2985-2998 are enriched in acidic residues; sequence ESDEEEEEEEEDEP. Ser2986 and Ser3019 each carry phosphoserine. Positions 3000–3020 are enriched in polar residues; the sequence is GATTRSTTRSEAQRSKTQLSP. A compositionally biased stretch (basic and acidic residues) spans 3039–3051; that stretch reads QRVEEAPVKKAKR.

It belongs to the BOD1 family. As to quaternary structure, interacts (via COMPASS-Shg1 domain) with SETD1A at stalled replication forks; this interaction mediates FANCD2-dependent nucleosome remodeling at reversed forks protecting them from nucleolytic degradation.

The protein resides in the chromosome. Functionally, component of the fork protection machinery required to protect stalled/damaged replication forks from uncontrolled DNA2-dependent resection. Acts by stabilizing RAD51 at stalled replication forks and protecting RAD51 nucleofilaments from the antirecombinogenic activities of FBH1 and BLM. Does not regulate spindle orientation. The sequence is that of Biorientation of chromosomes in cell division protein 1-like 1 from Homo sapiens (Human).